The primary structure comprises 297 residues: Phosphoribosylaminoimidazole-succinocarboxamide synthase (297 aa).

Belongs to the SAICAR synthetase family.

It carries out the reaction 5-amino-1-(5-phospho-D-ribosyl)imidazole-4-carboxylate + L-aspartate + ATP = (2S)-2-[5-amino-1-(5-phospho-beta-D-ribosyl)imidazole-4-carboxamido]succinate + ADP + phosphate + 2 H(+). It functions in the pathway purine metabolism; IMP biosynthesis via de novo pathway; 5-amino-1-(5-phospho-D-ribosyl)imidazole-4-carboxamide from 5-amino-1-(5-phospho-D-ribosyl)imidazole-4-carboxylate: step 1/2. The protein is Phosphoribosylaminoimidazole-succinocarboxamide synthase of Corynebacterium glutamicum (strain R).